The primary structure comprises 181 residues: ADP-ribosylation factor 1 (181 aa).

The N-myristoyl glycine moiety is linked to residue Gly-2. Residues 24–31 (GLDAAGKT), 67–71 (DVGGQ), and 126–129 (NKQD) contribute to the GTP site.

Belongs to the small GTPase superfamily. Arf family.

The protein resides in the golgi apparatus. The catalysed reaction is GTP + H2O = GDP + phosphate + H(+). GTP-binding protein involved in protein trafficking; may modulate vesicle budding and uncoating within the Golgi apparatus. The chain is ADP-ribosylation factor 1 (ARF1) from Daucus carota (Wild carrot).